The primary structure comprises 65 residues: Small ribosomal subunit protein bS21 (65 aa).

A compositionally biased stretch (basic residues) spans 46–57; sequence RLKRSRSKRRAQ. Residues 46-65 form a disordered region; sequence RLKRSRSKRRAQRANEERNS.

It belongs to the bacterial ribosomal protein bS21 family.

The chain is Small ribosomal subunit protein bS21 from Chlorobaculum tepidum (strain ATCC 49652 / DSM 12025 / NBRC 103806 / TLS) (Chlorobium tepidum).